Reading from the N-terminus, the 424-residue chain is Histidinol dehydrogenase (424 aa).

Residues Tyr-121, Gln-183, and Asn-206 each contribute to the NAD(+) site. Residues Ser-229, Gln-251, and His-254 each coordinate substrate. Residues Gln-251 and His-254 each contribute to the Zn(2+) site. Catalysis depends on proton acceptor residues Glu-319 and His-320. Residues His-320, Asp-353, Glu-407, and His-412 each contribute to the substrate site. Asp-353 provides a ligand contact to Zn(2+). His-412 is a binding site for Zn(2+).

Belongs to the histidinol dehydrogenase family. Requires Zn(2+) as cofactor.

It catalyses the reaction L-histidinol + 2 NAD(+) + H2O = L-histidine + 2 NADH + 3 H(+). Its pathway is amino-acid biosynthesis; L-histidine biosynthesis; L-histidine from 5-phospho-alpha-D-ribose 1-diphosphate: step 9/9. Its function is as follows. Catalyzes the sequential NAD-dependent oxidations of L-histidinol to L-histidinaldehyde and then to L-histidine. The protein is Histidinol dehydrogenase of Geobacillus kaustophilus (strain HTA426).